Reading from the N-terminus, the 397-residue chain is Elongation factor Tu 1 (397 aa).

Residues 10-206 enclose the tr-type G domain; the sequence is KPHVNIGTIG…AVDENIPQPE (197 aa). The segment at 19–26 is G1; it reads GHIDHGKT. GTP is bound at residue 19–26; that stretch reads GHIDHGKT. Position 26 (threonine 26) interacts with Mg(2+). The tract at residues 62–66 is G2; that stretch reads GITIS. The tract at residues 83–86 is G3; that stretch reads DCPG. GTP contacts are provided by residues 83–87 and 138–141; these read DCPGH and NKAD. Residues 138-141 are G4; sequence NKAD. A G5 region spans residues 176-178; that stretch reads SAL.

Belongs to the TRAFAC class translation factor GTPase superfamily. Classic translation factor GTPase family. EF-Tu/EF-1A subfamily. Monomer.

Its subcellular location is the cytoplasm. The enzyme catalyses GTP + H2O = GDP + phosphate + H(+). GTP hydrolase that promotes the GTP-dependent binding of aminoacyl-tRNA to the A-site of ribosomes during protein biosynthesis. The polypeptide is Elongation factor Tu 1 (Streptomyces avermitilis (strain ATCC 31267 / DSM 46492 / JCM 5070 / NBRC 14893 / NCIMB 12804 / NRRL 8165 / MA-4680)).